A 219-amino-acid polypeptide reads, in one-letter code: Octanoyltransferase (219 aa).

A BPL/LPL catalytic domain is found at 31–206; sequence DEDVDQIWLV…ELVELLGYDQ (176 aa). Substrate contacts are provided by residues 70–77, 137–139, and 150–152; these read RGGQVTYH, SLG, and GLA. Cysteine 168 functions as the Acyl-thioester intermediate in the catalytic mechanism.

This sequence belongs to the LipB family.

Its subcellular location is the cytoplasm. It carries out the reaction octanoyl-[ACP] + L-lysyl-[protein] = N(6)-octanoyl-L-lysyl-[protein] + holo-[ACP] + H(+). Its pathway is protein modification; protein lipoylation via endogenous pathway; protein N(6)-(lipoyl)lysine from octanoyl-[acyl-carrier-protein]: step 1/2. Catalyzes the transfer of endogenously produced octanoic acid from octanoyl-acyl-carrier-protein onto the lipoyl domains of lipoate-dependent enzymes. Lipoyl-ACP can also act as a substrate although octanoyl-ACP is likely to be the physiological substrate. This Vibrio atlanticus (strain LGP32) (Vibrio splendidus (strain Mel32)) protein is Octanoyltransferase.